The chain runs to 67 residues: Brevinin-1CDYa (67 aa).

The signal sequence occupies residues 1-22 (MFTLKKSLLLIFFLGTINLSLC). Positions 23–45 (EEERNADEEERRDDLEERDVEVE) are excised as a propeptide. Residues Cys61 and Cys67 are joined by a disulfide bond.

This sequence belongs to the frog skin active peptide (FSAP) family. Brevinin subfamily. As to expression, expressed by the skin glands.

The protein resides in the secreted. Its function is as follows. Antimicrobial peptide. Has low activity against the Gram-positive bacterium S.aureus (MIC=12.5 uM) and the Gram-negative bacterium E.coli (MIC=25 uM). Has weak hemolytic activity against human erythrocytes. The chain is Brevinin-1CDYa from Rana dybowskii (Dybovsky's frog).